The chain runs to 455 residues: MGNAKSLSGQKMASRFLPEEQAEVDKLFDVLSSSEGGVATGTFSLEAMKSHVKEALPPAMVTRLYNGMQRVKPTDRTLGSCRSVSREQFTAFLSQLLRGSCEEKGLMVMNMISDAEGPTKTRDVQKFTEDLVASVAHVLTHRHELRGWTCRKSEVPPDSMQAMVAQLLSEMKFQDGYKFQGPQCLDQVCDQAMIEEWVFHVPHVGMFLSVVVHRGLCLLGSSFDPSTLVPECLADQGGRFESILDVLSVIYLSSHLAPEHRQRWRLLFSTQLHGQSFSQLCSHITSQGPSLLVLEDRDGYVFGGFASCSWEVKPQFQGDNRCFLFSIAPRMATHLHTGYNNHFMYLNYGQQTMPNGLGMGGQHHYFGLWVAADFGKGHSKAKPACTTYNSPQLSAQEDFLFDKMEVWGLGNLLEEYEGKNKKSVLDSNPEARSLLEISGRARHSEGLREVPRDED.

A lipid anchor (N-myristoyl glycine) is attached at glycine 2. One can recognise a TLDc domain in the interval 242 to 410; the sequence is SILDVLSVIY…FDKMEVWGLG (169 aa). The disordered stretch occupies residues 435–455; it reads LEISGRARHSEGLREVPRDED. Residues 442–455 are compositionally biased toward basic and acidic residues; the sequence is RHSEGLREVPRDED.

As to quaternary structure, interacts (via C-terminal domain) with MTOR and MLST8; the interaction with MTOR increases upon nutrient stimulation.

It is found in the membrane. It localises to the cytoplasm. The protein resides in the lysosome. Activates an alternative mTOR signaling through RPS6KB2 activation and EIF4EBP1 repression to regulate cell proliferation and migration. Recruits MTOR at the lysosome, essential for MTOR signaling at the lysosome. The chain is MTOR-associated protein MEAK7 (Meak7) from Mus musculus (Mouse).